Reading from the N-terminus, the 1175-residue chain is Tyrosine-protein phosphatase non-receptor type 21 (1175 aa).

The FERM domain maps to 23–308 (LVARIQLLNN…ARHKFYRLNQ (286 aa)). The segment covering 395–421 (YSAHSTNSLNTPQPYLQPSPMSSNPSI) has biased composition (polar residues). Residues 395 to 445 (YSAHSTNSLNTPQPYLQPSPMSSNPSIPGSDVMRPDYIPSHRHSALIPPSY) are disordered. Phosphoserine is present on residues serine 577, serine 589, serine 590, serine 637, serine 673, serine 710, serine 711, serine 798, serine 800, and serine 805. The disordered stretch occupies residues 663-702 (DVAPRTFSAGSQSSVFSDKVKQEGTEEQGSGGYSHKKSLS). Residues 897–1168 (VFTEYERILK…TFVYRVLIQF (272 aa)) enclose the Tyrosine-protein phosphatase domain. Substrate-binding positions include glutamate 1068, 1109 to 1115 (CSAGVGR), and glutamine 1153. Residue cysteine 1109 is the Phosphocysteine intermediate of the active site.

It belongs to the protein-tyrosine phosphatase family. Non-receptor class subfamily. As to expression, particularly abundantly in adrenal glands.

The protein resides in the cytoplasm. Its subcellular location is the cytoskeleton. It catalyses the reaction O-phospho-L-tyrosyl-[protein] + H2O = L-tyrosyl-[protein] + phosphate. In Rattus norvegicus (Rat), this protein is Tyrosine-protein phosphatase non-receptor type 21 (Ptpn21).